A 76-amino-acid chain; its full sequence is Small ribosomal subunit protein bS18 (76 aa).

It belongs to the bacterial ribosomal protein bS18 family. As to quaternary structure, part of the 30S ribosomal subunit. Forms a tight heterodimer with protein bS6.

Its function is as follows. Binds as a heterodimer with protein bS6 to the central domain of the 16S rRNA, where it helps stabilize the platform of the 30S subunit. The protein is Small ribosomal subunit protein bS18 of Psychrobacter arcticus (strain DSM 17307 / VKM B-2377 / 273-4).